A 205-amino-acid chain; its full sequence is Ribonuclease HII (205 aa).

Residues 16-205 enclose the RNase H type-2 domain; the sequence is VSEVGIDEVG…KSFLNQSDLI (190 aa). A divalent metal cation is bound by residues aspartate 22, glutamate 23, and aspartate 118.

Belongs to the RNase HII family. It depends on Mn(2+) as a cofactor. Mg(2+) is required as a cofactor.

The protein localises to the cytoplasm. The catalysed reaction is Endonucleolytic cleavage to 5'-phosphomonoester.. Functionally, endonuclease that specifically degrades the RNA of RNA-DNA hybrids. The sequence is that of Ribonuclease HII from Prochlorococcus marinus (strain MIT 9312).